The primary structure comprises 234 residues: Hydrolase in agr operon (234 aa).

In terms of domain architecture, CN hydrolase spans 1–212 (ILYNKDTDVV…EKELTVTIDI (212 aa)). Catalysis depends on Glu14, which acts as the Proton acceptor. The active-site Proton donor is Lys83. Cys119 functions as the Nucleophile in the catalytic mechanism.

Belongs to the carbon-nitrogen hydrolase superfamily. NIT1/NIT2 family.

The chain is Hydrolase in agr operon from Staphylococcus lugdunensis.